A 186-amino-acid polypeptide reads, in one-letter code: Peptidyl-tRNA hydrolase (186 aa).

Tyr14 provides a ligand contact to tRNA. The active-site Proton acceptor is His19. 3 residues coordinate tRNA: Tyr64, Asn66, and Asn112.

This sequence belongs to the PTH family. In terms of assembly, monomer.

It localises to the cytoplasm. The enzyme catalyses an N-acyl-L-alpha-aminoacyl-tRNA + H2O = an N-acyl-L-amino acid + a tRNA + H(+). Hydrolyzes ribosome-free peptidyl-tRNAs (with 1 or more amino acids incorporated), which drop off the ribosome during protein synthesis, or as a result of ribosome stalling. In terms of biological role, catalyzes the release of premature peptidyl moieties from peptidyl-tRNA molecules trapped in stalled 50S ribosomal subunits, and thus maintains levels of free tRNAs and 50S ribosomes. This Bacillus cereus (strain ATCC 14579 / DSM 31 / CCUG 7414 / JCM 2152 / NBRC 15305 / NCIMB 9373 / NCTC 2599 / NRRL B-3711) protein is Peptidyl-tRNA hydrolase.